The sequence spans 187 residues: GTPase KRas (187 aa).

GTP is bound by residues 10-18 (GAVGVGKSA), 29-35 (VDEYDPT), 59-60 (AG), and 116-119 (NKCA). The Effector region motif lies at 32 to 40 (YDPTIEDSY). The interval 168-187 (EKMSKDGKKKKKSKTKCSIL) is disordered. The residue at position 184 (Cys-184) is a Cysteine methyl ester. Residue Cys-184 is the site of S-farnesyl cysteine attachment. The propeptide at 185–187 (SIL) is removed in mature form.

Belongs to the small GTPase superfamily. Ras family.

The protein resides in the cell membrane. It is found in the cytoplasm. It carries out the reaction GTP + H2O = GDP + phosphate + H(+). Its activity is regulated as follows. Alternates between an inactive form bound to GDP and an active form bound to GTP. Activated by a guanine nucleotide-exchange factor (GEF) and inactivated by a GTPase-activating protein (GAP). Functionally, ras proteins bind GDP/GTP and possess intrinsic GTPase activity. Plays an important role in the regulation of cell proliferation. The polypeptide is GTPase KRas (kras) (Xenopus laevis (African clawed frog)).